Consider the following 260-residue polypeptide: tRNA (guanine-N(1)-)-methyltransferase (260 aa).

S-adenosyl-L-methionine-binding positions include glycine 117 and 137-142; that span reads LGDFVL.

This sequence belongs to the RNA methyltransferase TrmD family. Homodimer.

It is found in the cytoplasm. The catalysed reaction is guanosine(37) in tRNA + S-adenosyl-L-methionine = N(1)-methylguanosine(37) in tRNA + S-adenosyl-L-homocysteine + H(+). Its function is as follows. Specifically methylates guanosine-37 in various tRNAs. The sequence is that of tRNA (guanine-N(1)-)-methyltransferase from Cupriavidus taiwanensis (strain DSM 17343 / BCRC 17206 / CCUG 44338 / CIP 107171 / LMG 19424 / R1) (Ralstonia taiwanensis (strain LMG 19424)).